The chain runs to 50 residues: Sperm protamine P1 (50 aa).

Cystine bridges form between cysteine 7–cysteine 15 and cysteine 38–cysteine 46.

It belongs to the protamine P1 family. Cross-linked by interchain disulfide bonds around the DNA-helix. Testis.

It localises to the nucleus. It is found in the chromosome. Its function is as follows. Protamines substitute for histones in the chromatin of sperm during the haploid phase of spermatogenesis. They compact sperm DNA into a highly condensed, stable and inactive complex. In Equus asinus (Donkey), this protein is Sperm protamine P1 (PRM1).